The chain runs to 219 residues: Envelope protein US9 homolog (219 aa).

Topologically, residues 1-193 (MEKAEAAAVV…RHRRRRVALT (193 aa)) are intravirion. The Di-leucine internalization motif motif lies at 145–146 (LL). Residues 153–168 (DYDSESGCYYSESDNE) form an acidic region. Phosphoserine; by host CK2 is present on residues Ser-163 and Ser-165. A helical; Signal-anchor for type II membrane protein membrane pass occupies residues 194 to 214 (VAGVILVVVLCAISGIVGAFL). The Virion surface portion of the chain corresponds to 215 to 219 (ARVFP).

It belongs to the alphaherpesvirinae envelope protein US9 family. In terms of processing, phosphorylated on serines within the acidic cluster. Phosphorylation determines whether endocytosed viral US9 traffics to the trans-Golgi network or recycles to the cell membrane.

Its subcellular location is the virion membrane. It localises to the host Golgi apparatus membrane. The protein resides in the host smooth endoplasmic reticulum membrane. The protein localises to the host cell membrane. Essential for the anterograde spread of the infection throughout the host nervous system. Together with the gE/gI heterodimer, US9 is involved in the sorting and transport of viral structural components toward axon tips. The chain is Envelope protein US9 homolog from Equine herpesvirus 1 (strain Kentucky A) (EHV-1).